The chain runs to 400 residues: Signal recognition particle receptor FtsY (400 aa).

2 disordered regions span residues 12 to 37 and 51 to 86; these read TKKT…QEEQ and NKIK…KDKK. Residues 51–72 are compositionally biased toward basic and acidic residues; the sequence is NKIKKTKTSETKKQEKPIETLK. Residues 192 to 199, 278 to 282, and 342 to 345 contribute to the GTP site; these read GVNGTGKT, DTAGR, and TKMD.

The protein belongs to the GTP-binding SRP family. FtsY subfamily. Part of the signal recognition particle protein translocation system, which is composed of SRP and FtsY.

It localises to the cell membrane. The protein localises to the cytoplasm. It catalyses the reaction GTP + H2O = GDP + phosphate + H(+). Functionally, involved in targeting and insertion of nascent membrane proteins into the cytoplasmic membrane. Acts as a receptor for the complex formed by the signal recognition particle (SRP) and the ribosome-nascent chain (RNC). This chain is Signal recognition particle receptor FtsY, found in Mycoplasma mycoides subsp. mycoides SC (strain CCUG 32753 / NCTC 10114 / PG1).